Here is a 203-residue protein sequence, read N- to C-terminus: Small ribosomal subunit protein uS4 (203 aa).

The S4 RNA-binding domain maps to 93–156 (QRLDNVVYRL…MKVPAILEAV (64 aa)).

The protein belongs to the universal ribosomal protein uS4 family. Part of the 30S ribosomal subunit. Contacts protein S5. The interaction surface between S4 and S5 is involved in control of translational fidelity.

Its function is as follows. One of the primary rRNA binding proteins, it binds directly to 16S rRNA where it nucleates assembly of the body of the 30S subunit. Functionally, with S5 and S12 plays an important role in translational accuracy. In Lactococcus lactis subsp. cremoris (strain MG1363), this protein is Small ribosomal subunit protein uS4.